Consider the following 121-residue polypeptide: Large ribosomal subunit protein bL19 (121 aa).

The protein belongs to the bacterial ribosomal protein bL19 family.

This protein is located at the 30S-50S ribosomal subunit interface and may play a role in the structure and function of the aminoacyl-tRNA binding site. This is Large ribosomal subunit protein bL19 (rplS) from Chlamydia muridarum (strain MoPn / Nigg).